We begin with the raw amino-acid sequence, 339 residues long: ATPase GET3 (339 aa).

37-44 (KGGVGKTT) provides a ligand contact to ATP. D66 is a catalytic residue. 2 residues coordinate ATP: E237 and N264. Positions 275 and 278 each coordinate Zn(2+).

The protein belongs to the arsA ATPase family. As to quaternary structure, homodimer.

The protein resides in the cytoplasm. Its subcellular location is the endoplasmic reticulum. ATPase required for the post-translational delivery of tail-anchored (TA) proteins to the endoplasmic reticulum. Recognizes and selectively binds the transmembrane domain of TA proteins in the cytosol. This complex then targets to the endoplasmic reticulum by membrane-bound receptors, where the tail-anchored protein is released for insertion. This process is regulated by ATP binding and hydrolysis. ATP binding drives the homodimer towards the closed dimer state, facilitating recognition of newly synthesized TA membrane proteins. ATP hydrolysis is required for insertion. Subsequently, the homodimer reverts towards the open dimer state, lowering its affinity for the membrane-bound receptor, and returning it to the cytosol to initiate a new round of targeting. This Rhodotorula glutinis (Yeast) protein is ATPase GET3.